We begin with the raw amino-acid sequence, 118 residues long: Neutral phospholipase A2 homolog taipoxin beta chain 2 (118 aa).

7 cysteine pairs are disulfide-bonded: Cys-11–Cys-71, Cys-27–Cys-117, Cys-29–Cys-45, Cys-44–Cys-98, Cys-51–Cys-91, Cys-60–Cys-84, and Cys-78–Cys-89.

The protein belongs to the phospholipase A2 family. Group I subfamily. D49 sub-subfamily. As to quaternary structure, heterotrimer of alpha, beta, and gamma chains; non-covalently linked. Expressed by the venom gland.

It is found in the secreted. In terms of biological role, heterotrimer: Snake venom phospholipase A2 (PLA2) heterotrimer that acts as a potent presynaptic neurotoxin by blocking synaptic transmission and synaptic vesicle recycling. May act by binding in a calcium-dependent fashion to neurotonal pentraxin-1 (NPTX1) and neurotonal pentraxin-2 (NPTX2), but not to neuronal pentraxin receptor (NPTXR). Also binds to taipoxin-associated calcium binding protein 49 (RCN2), a protein localized in the lumen of endoplasmic reticulum. Its function is as follows. Monomer (beta chain): Snake venom phospholipase A2 homolog that is neither toxic nor enzymatically active. Does not bind calcium. The sequence is that of Neutral phospholipase A2 homolog taipoxin beta chain 2 from Oxyuranus scutellatus scutellatus (Australian taipan).